Here is a 582-residue protein sequence, read N- to C-terminus: Sodium-dependent low-affinity dicarboxylate transporter 1 (582 aa).

The next 12 membrane-spanning stretches (helical) occupy residues 17 to 37 (SFVI…VGDS), 59 to 79 (ALPL…FGIM), 87 to 107 (AYLP…LAVE), 130 to 150 (VMAG…NTAT), 224 to 244 (LMLS…TGTA), 271 to 291 (IFAF…LYLL), 317 to 337 (FSFA…LWIL), 353 to 373 (EFVS…TLPE), 401 to 421 (FPWS…GVKE), 455 to 475 (TNVC…AELA), 482 to 502 (PLNF…LPVA), and 527 to 547 (VTLG…GFVF).

Belongs to the SLC13A/DASS transporter (TC 2.A.47) family. NADC subfamily. As to expression, nad-1 and nad-2 are coexpressed in the intestinal tract from early larvae to adults, expression is from the pharynx through to the anus. Expression level is significantly greater in the anterior half of the intestine than in the posterior half.

It is found in the membrane. Functionally, low affinity sodium-dicarboxylate cotransporter that accepts a range of tricarboxylic acid-cycle intermediates with 4-5 carbon atoms. There is no interaction with monocarboxylates. In Caenorhabditis elegans, this protein is Sodium-dependent low-affinity dicarboxylate transporter 1 (nac-1).